The primary structure comprises 231 residues: 7-cyano-7-deazaguanine synthase (231 aa).

8–18 lines the ATP pocket; that stretch reads FSGGQDSTTCL. Residues C188, C197, C200, and C203 each coordinate Zn(2+).

The protein belongs to the QueC family. Zn(2+) is required as a cofactor.

It catalyses the reaction 7-carboxy-7-deazaguanine + NH4(+) + ATP = 7-cyano-7-deazaguanine + ADP + phosphate + H2O + H(+). Its pathway is purine metabolism; 7-cyano-7-deazaguanine biosynthesis. Its function is as follows. Catalyzes the ATP-dependent conversion of 7-carboxy-7-deazaguanine (CDG) to 7-cyano-7-deazaguanine (preQ(0)). The polypeptide is 7-cyano-7-deazaguanine synthase (Escherichia coli O127:H6 (strain E2348/69 / EPEC)).